Here is a 232-residue protein sequence, read N- to C-terminus: Ureidoacrylate amidohydrolase RutB (232 aa).

D26 (proton acceptor) is an active-site residue. K135 is a catalytic residue. Catalysis depends on C168, which acts as the Nucleophile.

It belongs to the isochorismatase family. RutB subfamily.

The enzyme catalyses (Z)-3-ureidoacrylate + H2O + H(+) = (Z)-3-aminoacrylate + NH4(+) + CO2. It carries out the reaction (Z)-3-ureidoacrylate + H2O = (Z)-3-aminoacrylate + carbamate + H(+). The catalysed reaction is (Z)-2-methylureidoacrylate + H2O + H(+) = (Z)-2-methylaminoacrylate + NH4(+) + CO2. Functionally, hydrolyzes ureidoacrylate to form aminoacrylate and carbamate. The carbamate hydrolyzes spontaneously, thereby releasing one of the nitrogen atoms of the pyrimidine ring as ammonia and one of its carbon atoms as CO2. In Cronobacter sakazakii (strain ATCC BAA-894) (Enterobacter sakazakii), this protein is Ureidoacrylate amidohydrolase RutB.